We begin with the raw amino-acid sequence, 493 residues long: Geraniol 8-hydroxylase (493 aa).

Topologically, residues 1–6 are lumenal; sequence MDYLTI. A helical transmembrane segment spans residues 7–23; sequence ILTLLFALTLYEAFSYL. Residues 24–493 are Cytoplasmic-facing; the sequence is SRRTKNLPPG…HPLRAVPSTL (470 aa). Residue Cys-436 participates in heme binding.

This sequence belongs to the cytochrome P450 family. It depends on heme as a cofactor. In terms of tissue distribution, expressed in roots, stems, leaves and flower buds. Hardly detected in mature flowers and fruits. Expressed in the internal phloem-associated parenchyma.

It is found in the endoplasmic reticulum membrane. It carries out the reaction (2E)-geraniol + reduced [NADPH--hemoprotein reductase] + O2 = (6E)-8-hydroxygeraniol + oxidized [NADPH--hemoprotein reductase] + H2O + H(+). In terms of biological role, hydroxylase involved in the biosynthesis of hydroxygeraniol, a precursor of the terpenoid indole alkaloids such as vinblastine and vincristine. Also able to hydroxylate in vitro nerol and to catalyze 3'-hydroxylation of the flavanone naringenin to form eriodictyol. No activity with apigenin, kaempferol, p-coumaric acid and ferulic acid as substrates. This chain is Geraniol 8-hydroxylase (CYP76B6), found in Catharanthus roseus (Madagascar periwinkle).